Consider the following 223-residue polypeptide: Endonuclease V (223 aa).

Positions 35 and 103 each coordinate Mg(2+).

This sequence belongs to the endonuclease V family. Mg(2+) serves as cofactor.

The protein localises to the cytoplasm. The catalysed reaction is Endonucleolytic cleavage at apurinic or apyrimidinic sites to products with a 5'-phosphate.. Its function is as follows. DNA repair enzyme involved in the repair of deaminated bases. Selectively cleaves double-stranded DNA at the second phosphodiester bond 3' to a deoxyinosine leaving behind the intact lesion on the nicked DNA. In Cronobacter sakazakii (strain ATCC BAA-894) (Enterobacter sakazakii), this protein is Endonuclease V.